The sequence spans 463 residues: T-box transcription factor TBX1 (463 aa).

Disordered stretches follow at residues 39–58 (SPSP…PCSA) and 75–103 (GASS…PVKK). Low complexity predominate over residues 75-97 (GASSSSCASSTPGSGSTGSSGSS). The T-box DNA-binding region spans 119–297 (LWDEFNQLGT…SNPFAKGFRD (179 aa)). Disordered stretches follow at residues 320–354 (RSRN…PLHG) and 367–405 (SPSL…LHHH). The span at 323 to 332 (NPVSSPPQNG) shows a compositional bias: polar residues. The span at 333 to 347 (SDKDGDGRREYERDT) shows a compositional bias: basic and acidic residues. The span at 367-380 (SPSLPVPGGLVPLS) shows a compositional bias: low complexity. The Nuclear localization signal motif lies at 420 to 431 (KTRPAPYPLPSI).

In terms of assembly, binds DNA as a dimer. Interacts with dscr6/ripply3.

It is found in the nucleus. Probable transcriptional regulator involved in developmental processes. Binds to the palindromic T site 5'-TTCACACCTAGGTGTGAA-3' DNA sequence. Induces pre-placodal ectoderm (PPE) gene expression in regions where RIPPLY3 is absent. Plays a role in the formation of the anteroposterior (AP) axis during embryonic development; required to establish the posterolateral border of the pre-placodal ectoderm (PPE) acting downstream of the retinoic acid receptor (RAR) signaling. The sequence is that of T-box transcription factor TBX1 (tbx1) from Xenopus tropicalis (Western clawed frog).